A 305-amino-acid chain; its full sequence is uncharacterized protein (305 aa).

Residues 8–28 (IGALVTAVIAIGIVFSHMILF) traverse the membrane as a helical segment.

The protein resides in the membrane. This is an uncharacterized protein from Bacillus subtilis (strain 168).